The following is a 107-amino-acid chain: Metallothionein-1 (107 aa).

Residues 1–2 (MD) constitute a propeptide that is removed on maturation.

This sequence belongs to the metallothionein superfamily. Type 7 family.

In terms of biological role, the metallothioneins are involved in the cellular sequestration of toxic metal ions. Binds 12 cadmium ions per molecule. The chain is Metallothionein-1 from Tetrahymena pyriformis.